The primary structure comprises 231 residues: uncharacterized protein (231 aa).

Residues M1 to S25 form the signal peptide. At T26 to T200 the chain is on the extracellular side. A disordered region spans residues S39–G64. Residues L201–A225 traverse the membrane as a helical segment. Residues P226–S231 are Cytoplasmic-facing.

It localises to the membrane. This is an uncharacterized protein from Homo sapiens (Human).